The sequence spans 247 residues: Histone acetyltransferase MCC1 (247 aa).

The region spanning 25 to 198 (IHYRPINPND…DAFLFVYFIN (174 aa)) is the N-acetyltransferase domain.

This sequence belongs to the acetyltransferase family.

It carries out the reaction L-lysyl-[protein] + acetyl-CoA = N(6)-acetyl-L-lysyl-[protein] + CoA + H(+). Functionally, histone acetyltransferase that probably regulates acetylation status of histone H3 during meiosis. Histone acetylation may influence recombination and chromosome segregation. The protein is Histone acetyltransferase MCC1 (MCC1) of Arabidopsis thaliana (Mouse-ear cress).